A 332-amino-acid polypeptide reads, in one-letter code: T-cell surface glycoprotein CD1b2 (332 aa).

A signal peptide spans 1–17 (MLLLVLALLAVLFPAGD). The Extracellular portion of the chain corresponds to 18–301 (TQDAFPEPIS…ILYWGNSSIG (284 aa)). Asparagine 38, asparagine 75, and asparagine 146 each carry an N-linked (GlcNAc...) asparagine glycan. Intrachain disulfides connect cysteine 120–cysteine 184, cysteine 149–cysteine 163, and cysteine 224–cysteine 279. The 111-residue stretch at 185–295 (PRYLMSVLEA…LGGQDIILYW (111 aa)) folds into the Ig-like domain. Asparagine 297 carries N-linked (GlcNAc...) asparagine glycosylation. Residues 302–322 (WIILAVFVSCLIVLLFYVLWF) traverse the membrane as a helical segment. Residues 323 to 332 (YKHWSYQDIL) are Cytoplasmic-facing. Positions 328 to 331 (YQDI) match the Internalization signal motif.

Heterodimer with B2M (beta-2-microglobulin). Interacts with saposin C.

It is found in the cell membrane. The protein resides in the endosome membrane. Its subcellular location is the lysosome membrane. In terms of biological role, antigen-presenting protein that binds self and non-self lipid and glycolipid antigens and presents them to T-cell receptors on natural killer T-cells. The sequence is that of T-cell surface glycoprotein CD1b2 (CD1B2) from Cavia porcellus (Guinea pig).